The primary structure comprises 238 residues: MGKRLIVQRRGKGSPLYRSRPWLHPAPARYPPLTPVTLRGRVVELVHDPGRWVPLAHIVLENGDEFYIPAAEGMYVGQIIEIGPDARPVNGNILPVGKIPEGTQVYNIEIRPGDGGKLVRAYGTYAIILGRSGNKTIIQLPSGKVKEVPNDARATIGIVAGAGRLEKPLLKAGAAYYKWSAKPHVWPRVRGVAMNAVNHPHGGGSHQSPSFPTTVSRNAPPGRKVGHIAARSTGRRKR.

Residues 198 to 238 (NHPHGGGSHQSPSFPTTVSRNAPPGRKVGHIAARSTGRRKR) form a disordered region. The span at 206–217 (HQSPSFPTTVSR) shows a compositional bias: polar residues.

The protein belongs to the universal ribosomal protein uL2 family. Part of the 50S ribosomal subunit. Forms a bridge to the 30S subunit in the 70S ribosome.

One of the primary rRNA binding proteins. Required for association of the 30S and 50S subunits to form the 70S ribosome, for tRNA binding and peptide bond formation. It has been suggested to have peptidyltransferase activity; this is somewhat controversial. Makes several contacts with the 16S rRNA in the 70S ribosome. The sequence is that of Large ribosomal subunit protein uL2 from Hyperthermus butylicus (strain DSM 5456 / JCM 9403 / PLM1-5).